The chain runs to 348 residues: Protein RecA (348 aa).

65-72 (GPESSGKT) is a binding site for ATP.

The protein belongs to the RecA family.

Its subcellular location is the cytoplasm. Functionally, can catalyze the hydrolysis of ATP in the presence of single-stranded DNA, the ATP-dependent uptake of single-stranded DNA by duplex DNA, and the ATP-dependent hybridization of homologous single-stranded DNAs. It interacts with LexA causing its activation and leading to its autocatalytic cleavage. The sequence is that of Protein RecA from Saccharophagus degradans (strain 2-40 / ATCC 43961 / DSM 17024).